Reading from the N-terminus, the 310-residue chain is MATKRKVIITCAPTGAIHTPSMSPYLPVTPQQIGDAALAAAKEGAAIIHLHARDPDDGHPTQDPAVFQEFLPRIKAECDAVINLTTGGSPHMTVAERLKPAHHFQPEVASLNMGSMNFGLYPMLERFKELKYDWERKHLENSRDLVFKNTFADIEYILTSCGANGTRFEFECYDISHLYNLAHFVDRGLAKPPFFVQSVFGLLGGIGAHPEDLAHMRRTADRLFGKDYVWSILGAGRNQIPLASIGVAQGSNARVGLEDSLWIEPGKLAESSAAQVRKIRQVIEGLSLDIATPAEAREMLQLKGAANTNF.

Zn(2+)-binding residues include His49, His51, and Glu258.

This sequence belongs to the BKACE family. Zn(2+) serves as cofactor.

The enzyme catalyses 3,5-dioxohexanoate + acetyl-CoA = acetoacetyl-CoA + acetoacetate. In terms of biological role, catalyzes the condensation of 3,5-dioxohexanoate and acetyl-CoA, forming acetoacetate and acetoacetyl-CoA. May be involved in fatty acid biosynthesis rescue via triacetic acid lactone. The polypeptide is 3,5-dioxohexanoate:acetyl-CoA acetone transferase (Paraburkholderia graminis (strain ATCC 700544 / DSM 17151 / LMG 18924 / NCIMB 13744 / C4D1M)).